A 294-amino-acid chain; its full sequence is Pyridoxal 5'-phosphate synthase subunit PdxS (294 aa).

D-ribose 5-phosphate is bound at residue D24. K81 serves as the catalytic Schiff-base intermediate with D-ribose 5-phosphate. D-ribose 5-phosphate is bound at residue G153. Position 165 (R165) interacts with D-glyceraldehyde 3-phosphate. D-ribose 5-phosphate is bound by residues G214 and G235–S236.

It belongs to the PdxS/SNZ family. In terms of assembly, homohexamer and homododecamer. In the presence of PdxT, forms a dodecamer of heterodimers.

It carries out the reaction aldehydo-D-ribose 5-phosphate + D-glyceraldehyde 3-phosphate + L-glutamine = pyridoxal 5'-phosphate + L-glutamate + phosphate + 3 H2O + H(+). It participates in cofactor biosynthesis; pyridoxal 5'-phosphate biosynthesis. Functionally, catalyzes the formation of pyridoxal 5'-phosphate from ribose 5-phosphate (RBP), glyceraldehyde 3-phosphate (G3P) and ammonia. The ammonia is provided by the PdxT subunit. Can also use ribulose 5-phosphate and dihydroxyacetone phosphate as substrates, resulting from enzyme-catalyzed isomerization of RBP and G3P, respectively. This is Pyridoxal 5'-phosphate synthase subunit PdxS from Bacillus subtilis (strain 168).